A 238-amino-acid chain; its full sequence is Probable septum site-determining protein MinC (238 aa).

The protein belongs to the MinC family. Interacts with MinD and FtsZ.

In terms of biological role, cell division inhibitor that blocks the formation of polar Z ring septums. Rapidly oscillates between the poles of the cell to destabilize FtsZ filaments that have formed before they mature into polar Z rings. Prevents FtsZ polymerization. This chain is Probable septum site-determining protein MinC, found in Xylella fastidiosa (strain M23).